A 556-amino-acid chain; its full sequence is Small ribosomal subunit protein uS3m (556 aa).

Belongs to the universal ribosomal protein uS3 family. In terms of assembly, component of the mitochondrial ribosome small subunit.

Its subcellular location is the mitochondrion. The chain is Small ribosomal subunit protein uS3m (RPS3) from Arabidopsis thaliana (Mouse-ear cress).